A 734-amino-acid chain; its full sequence is Photosystem I P700 chlorophyll a apoprotein A2 (734 aa).

Helical transmembrane passes span 46–69, 135–158, 175–199, 273–291, 330–353, 369–395, 417–439, and 517–535; these read IFASHFGQLAIIFLWTSGNLFHVA, LYTGALFLLFLSAISLIGGWLHLQ, LNHHLSGLFGVSSLAWTGHLVHVAI, MAHHHLAIAFIFLIAGHMY, LHFQLGLALACLGVITSLVAQHMY, AASYTHHQYIAGFIMTGAFAHGAIFFI, AIISHLSWASLFLGFHTLGLYVH, and FLVHHAIALGLHTTTLILV. Residues Cys-559 and Cys-568 each coordinate [4Fe-4S] cluster. The next 2 helical transmembrane spans lie at 575 to 596 and 643 to 665; these read AFYLAVFWMLNTIGWVTFYWHW and LSVWAWMFLFGHLVWATGFMFLI. Residues His-654, Met-662, and Tyr-670 each coordinate chlorophyll a. Position 671 (Trp-671) interacts with phylloquinone. The chain crosses the membrane as a helical span at residues 707–727; it reads LVGLAHFSVGYIFTYAAFLIA.

The protein belongs to the PsaA/PsaB family. The PsaA/B heterodimer binds the P700 chlorophyll special pair and subsequent electron acceptors. PSI consists of a core antenna complex that captures photons, and an electron transfer chain that converts photonic excitation into a charge separation. The eukaryotic PSI reaction center is composed of at least 11 subunits. It depends on P700 is a chlorophyll a/chlorophyll a' dimer, A0 is one or more chlorophyll a, A1 is one or both phylloquinones and FX is a shared 4Fe-4S iron-sulfur center. as a cofactor.

The protein localises to the plastid. The protein resides in the chloroplast thylakoid membrane. The catalysed reaction is reduced [plastocyanin] + hnu + oxidized [2Fe-2S]-[ferredoxin] = oxidized [plastocyanin] + reduced [2Fe-2S]-[ferredoxin]. Functionally, psaA and PsaB bind P700, the primary electron donor of photosystem I (PSI), as well as the electron acceptors A0, A1 and FX. PSI is a plastocyanin-ferredoxin oxidoreductase, converting photonic excitation into a charge separation, which transfers an electron from the donor P700 chlorophyll pair to the spectroscopically characterized acceptors A0, A1, FX, FA and FB in turn. Oxidized P700 is reduced on the lumenal side of the thylakoid membrane by plastocyanin. The protein is Photosystem I P700 chlorophyll a apoprotein A2 of Acorus calamus (Sweet flag).